The sequence spans 353 residues: Inositol 3-kinase (353 aa).

Residues serine 197, 247 to 250 (GAGD), and asparagine 274 contribute to the ATP site. Aspartate 250 serves as the catalytic Proton acceptor.

This sequence belongs to the carbohydrate kinase pfkB family.

The catalysed reaction is myo-inositol + ATP = 1D-myo-inositol 3-phosphate + ADP + H(+). In terms of biological role, kinase that phosphorylates myo-inositol to produce multiple myo-inositol monophosphates. Participates in phytic acid biosynthesis in developing seeds. Phytic acid is the primary storage form of phosphorus in cereal grains and other plant seeds. The protein is Inositol 3-kinase of Arabidopsis thaliana (Mouse-ear cress).